Reading from the N-terminus, the 100-residue chain is Large ribosomal subunit protein bL21 (100 aa).

It belongs to the bacterial ribosomal protein bL21 family. As to quaternary structure, part of the 50S ribosomal subunit. Contacts protein L20.

Functionally, this protein binds to 23S rRNA in the presence of protein L20. The protein is Large ribosomal subunit protein bL21 of Wolbachia pipientis subsp. Culex pipiens (strain wPip).